The primary structure comprises 473 residues: MKTLYSLRRFYPVETLFNGTLALTGRDQETTGFAWWAGNARLINLSGKLLGAHVAHAGLIVFWAGAMNLFEVAHFVPEKPMYEQGLILLPHLATLGWGVGPGGEVIDTFPYFVSGVLHLISSAVLGFGGIYHALLGPETLEESFPFFGYVWKDRNKMTTILGIHLILLGIGAFLLVFKALYFGGVYDTWAPGGGDVRKITNLTLSPSVIFGYLLKSPFGGEGWIVSVDDLEDIIGGHVWLGSICILGGIWHILTKPFAWARRAFVWSGEAYLSYSLGALAIFGFVACCFVWFNNTAYPSEFYGPTGPEASQAQAFTFLVRDQRLGANVGSAQGPTGLGKYLMRSPTGEVIFGGETMRFWDLRAPWLEPLRGPNGLDLGRLKKDIQPWQERRSAEYMTHAPLGSLNSVGGVATEINAVNYVSPRSWLATSHFVLGFFFFVGHLWHAGRARAAAAGFEKGIDRDFEPVLSMTPLN.

Residues 1–14 constitute a propeptide that is removed on maturation; that stretch reads MKTLYSLRRFYPVE. The residue at position 15 (Thr-15) is an N-acetylthreonine. At Thr-15 the chain carries Phosphothreonine. Helical transmembrane passes span 69–93, 134–155, 178–200, 255–275, and 291–312; these read LFEVAHFVPEKPMYEQGLILLPHLA, LLGPETLEESFPFFGYVWKDRN, KALYFGGVYDTWAPGGGDVRKIT, KPFAWARRAFVWSGEAYLSYS, and WFNNTAYPSEFYGPTGPEASQA. Residue Glu-367 coordinates [CaMn4O5] cluster. Residues 447–471 form a helical membrane-spanning segment; that stretch reads RARAAAAGFEKGIDRDFEPVLSMTP.

Belongs to the PsbB/PsbC family. PsbC subfamily. PSII is composed of 1 copy each of membrane proteins PsbA, PsbB, PsbC, PsbD, PsbE, PsbF, PsbH, PsbI, PsbJ, PsbK, PsbL, PsbM, PsbT, PsbX, PsbY, PsbZ, Psb30/Ycf12, at least 3 peripheral proteins of the oxygen-evolving complex and a large number of cofactors. It forms dimeric complexes. The cofactor is Binds multiple chlorophylls and provides some of the ligands for the Ca-4Mn-5O cluster of the oxygen-evolving complex. It may also provide a ligand for a Cl- that is required for oxygen evolution. PSII binds additional chlorophylls, carotenoids and specific lipids..

The protein resides in the plastid. It is found in the chloroplast thylakoid membrane. In terms of biological role, one of the components of the core complex of photosystem II (PSII). It binds chlorophyll and helps catalyze the primary light-induced photochemical processes of PSII. PSII is a light-driven water:plastoquinone oxidoreductase, using light energy to abstract electrons from H(2)O, generating O(2) and a proton gradient subsequently used for ATP formation. The sequence is that of Photosystem II CP43 reaction center protein from Piper cenocladum (Ant piper).